Here is a 243-residue protein sequence, read N- to C-terminus: Phomoidride biosynthesis cluster protein B (243 aa).

This sequence belongs to the tstB family.

In terms of biological role, phosphatidylethanolamine-binding protein; part of the gene cluster that mediates the biosynthesis of the antihypercholesterolemic agents phomoidrides which are dimeric anhydrides. Within the pathway, tstB is not essential for dimerization and its function has still to be determined. The pathway begins with the highly reducing polyketide synthase tstA that catalyzes the formation of a C12-fatty acyl-ACP, starting from one acetate and 5 malonate units. The hydrolase tstM is involved in the release of the C12-fatty acyl chain from phiA. The alkylcitrate synthase (ACS) tstJ and the alkylcitrate dehydratase (ACDH) tstI then give rise to decarboxylated monomeric anhydrides by coupling the C12-fatty acyl chain with oxalacetic acid. The cyclase tstC is responsible for the dimerization of the monomeric anhydrides which leads to the production of prephomoidride that contains the characteristic bicyclo[4.3.1]deca-1,6-diene system of phomoidrides. Iterative oxidation catalyzed by the alpha-ketoglutarate-dependent dioxygenase tstK produced then phomoidride A. Finally, the methyltransferase tstE converts phomoidride A to phomoidride B via an acetalization reaction. The phosphatidylethanolamine-binding protein tstB and tstN are not essential for dimerization and their functions have still to be determined. This is Phomoidride biosynthesis cluster protein B from Talaromyces stipitatus (strain ATCC 10500 / CBS 375.48 / QM 6759 / NRRL 1006) (Penicillium stipitatum).